A 148-amino-acid polypeptide reads, in one-letter code: FAD synthase (148 aa).

ATP contacts are provided by residues 14-15 (TF), 19-22 (HPGH), and Asp97.

The protein belongs to the archaeal FAD synthase family. As to quaternary structure, homodimer. A divalent metal cation serves as cofactor.

The catalysed reaction is FMN + ATP + H(+) = FAD + diphosphate. The protein operates within cofactor biosynthesis; FAD biosynthesis; FAD from FMN: step 1/1. Functionally, catalyzes the transfer of the AMP portion of ATP to flavin mononucleotide (FMN) to produce flavin adenine dinucleotide (FAD) coenzyme. This chain is FAD synthase, found in Natrialba magadii (strain ATCC 43099 / DSM 3394 / CCM 3739 / CIP 104546 / IAM 13178 / JCM 8861 / NBRC 102185 / NCIMB 2190 / MS3) (Natronobacterium magadii).